Reading from the N-terminus, the 542-residue chain is CTP synthase (542 aa).

An amidoligase domain region spans residues 1–265 (MTRYIFVTGG…DDFVVERFGL (265 aa)). Ser-13 serves as a coordination point for CTP. UTP is bound at residue Ser-13. Residues 14–19 (SLGKGI) and Asp-71 contribute to the ATP site. Mg(2+)-binding residues include Asp-71 and Glu-139. CTP-binding positions include 146 to 148 (DIE), 186 to 191 (KTKPTQ), and Lys-222. Residues 186-191 (KTKPTQ) and Lys-222 contribute to the UTP site. One can recognise a Glutamine amidotransferase type-1 domain in the interval 290-541 (TIAMVGKYME…VKAALAQKNK (252 aa)). Position 351 (Gly-351) interacts with L-glutamine. Cys-378 (nucleophile; for glutamine hydrolysis) is an active-site residue. L-glutamine-binding positions include 379–382 (LGMQ), Glu-402, and Arg-469. Active-site residues include His-514 and Glu-516.

It belongs to the CTP synthase family. As to quaternary structure, homotetramer.

The enzyme catalyses UTP + L-glutamine + ATP + H2O = CTP + L-glutamate + ADP + phosphate + 2 H(+). It carries out the reaction L-glutamine + H2O = L-glutamate + NH4(+). The catalysed reaction is UTP + NH4(+) + ATP = CTP + ADP + phosphate + 2 H(+). Its pathway is pyrimidine metabolism; CTP biosynthesis via de novo pathway; CTP from UDP: step 2/2. Its activity is regulated as follows. Allosterically activated by GTP, when glutamine is the substrate; GTP has no effect on the reaction when ammonia is the substrate. The allosteric effector GTP functions by stabilizing the protein conformation that binds the tetrahedral intermediate(s) formed during glutamine hydrolysis. Inhibited by the product CTP, via allosteric rather than competitive inhibition. In terms of biological role, catalyzes the ATP-dependent amination of UTP to CTP with either L-glutamine or ammonia as the source of nitrogen. Regulates intracellular CTP levels through interactions with the four ribonucleotide triphosphates. In Pseudomonas putida (strain W619), this protein is CTP synthase.